The primary structure comprises 212 residues: Ribosome maturation factor RimM (212 aa).

The 77-residue stretch at 105-181 folds into the PRC barrel domain; the sequence is EEEFYYADLI…IDSITAGLDN (77 aa). The interval 181–212 is disordered; it reads NAELSGEEDEAEGPESARGSRPRGPKSAGEPR.

Belongs to the RimM family. As to quaternary structure, binds ribosomal protein uS19.

The protein localises to the cytoplasm. Functionally, an accessory protein needed during the final step in the assembly of 30S ribosomal subunit, possibly for assembly of the head region. Essential for efficient processing of 16S rRNA. May be needed both before and after RbfA during the maturation of 16S rRNA. It has affinity for free ribosomal 30S subunits but not for 70S ribosomes. This chain is Ribosome maturation factor RimM, found in Chelativorans sp. (strain BNC1).